The primary structure comprises 295 residues: Voltage-gated potassium channel (295 aa).

Residues 1-38 (MSVERWVFPGCSVMARFRRGLSDLGGRVRNIGDVMEHP) are Cytoplasmic-facing. Residues 39–63 (LVELGVSYAALLSVIVVVVEYTMQL) form a helical membrane-spanning segment. Topologically, residues 64–67 (SGEY) are extracellular. Residues 68-92 (LVRLYLVDLILVIILWADYAYRAYK) traverse the membrane as a helical segment. The Cytoplasmic portion of the chain corresponds to 93 to 96 (SGDP). The helical intramembrane region spans 97–105 (AGYVKKTLY). At 106 to 108 (EIP) the chain is on the extracellular side. Residues 109 to 125 (ALVPAGLLALIEGHLAG) form a helical; Voltage-sensor membrane-spanning segment. Over 126–128 (LGL) the chain is Cytoplasmic. The helical; Voltage-sensor transmembrane segment at 129-145 (FRLVRLLRFLRILLIIS) threads the bilayer. Over 146–159 (RGSKFLSAIADAAD) the chain is Cytoplasmic. A helical transmembrane segment spans residues 160-184 (KIRFYHLFGAVMLTVLYGAFAIYIV). Over 185-195 (EYPDPNSSIKS) the chain is Extracellular. Residues 196 to 208 (VFDALWWAVVTAT) constitute an intramembrane region (pore-forming). The Selectivity filter signature appears at 209–214 (TVGYGD). Residues 209 to 221 (TVGYGDVVPATPI) lie on the Extracellular side of the membrane. Residues 222-253 (GKVIGIAVMLTGISALTLLIGTVSNMFQKILV) traverse the membrane as a helical segment. Residues 254 to 295 (GEPEPSCSPAKLAEMVSSMSEEEFEEFVRTLKNLRRLENSMK) lie on the Cytoplasmic side of the membrane.

Belongs to the potassium channel family.

It is found in the cell membrane. Mediates a strong voltage-dependent potassium ion permeability of excitable membranes. Assuming opened or closed conformations in response to the voltage difference across the membrane, the protein forms a potassium-selective channel through which potassium ions may pass in accordance with their electrochemical gradient. The sequence is that of Voltage-gated potassium channel from Aeropyrum pernix (strain ATCC 700893 / DSM 11879 / JCM 9820 / NBRC 100138 / K1).